The primary structure comprises 304 residues: E3 ubiquitin-protein ligase CHIP (304 aa).

The span at 1 to 10 (MKGKEEKEGG) shows a compositional bias: basic and acidic residues. The interval 1 to 30 (MKGKEEKEGGARLGTGGGGSPDKSPSAQEL) is disordered. A Glycyl lysine isopeptide (Lys-Gly) (interchain with G-Cter in ubiquitin) cross-link involves residue lysine 2. The segment covering 11–20 (ARLGTGGGGS) has biased composition (gly residues). A Phosphoserine modification is found at serine 20. Lysine 23 is covalently cross-linked (Glycyl lysine isopeptide (Lys-Gly) (interchain with G-Cter in ubiquitin)). Phosphoserine is present on residues serine 24 and serine 26. 3 TPR repeats span residues 27-60 (AQEL…NPLV), 61-94 (AVYY…DGQS), and 96-128 (KAHF…AKEQ). Residues 102 to 201 (GQCQLEMESY…GHIRAQQACI (100 aa)) form a required for interaction with MAPK7 region. The required for interaction with and ubiquitination of MYOCD stretch occupies residues 143-197 (AKKKRWNSIEERRIHQESELHSYLTRLIAAERERELEECQRNHEGHEDDGHIRAQ). Residues 144–198 (KKKRWNSIEERRIHQESELHSYLTRLIAAERERELEECQRNHEGHEDDGHIRAQQ) are required for interaction with FOXO1. The required for ubiquitination of FOXO1 stretch occupies residues 144–304 (KKKRWNSIEE…ISENGWVEDY (161 aa)). The residue at position 150 (serine 150) is a Phosphoserine. Glycyl lysine isopeptide (Lys-Gly) (interchain with G-Cter in ubiquitin) cross-links involve residues lysine 222 and lysine 256. The region spanning 227–301 (DIPDYLCGKI…DAFISENGWV (75 aa)) is the U-box domain. Serine 274 bears the Phosphoserine mark.

Homodimer. Interacts with BAG2, and with the E2 ubiquitin conjugating enzymes UBE2D1, UBE2D2 and UBE2D3. Detected in a ternary complex containing STUB1, HSPA1A and HSPBP1. Part of a complex composed of STUB1/CHIP, VCP/p97, CHRNA3, and UBXN2A that modulates the ubiquitination and endoplasmic reticulum-associated degradation (ERAD) of CHRNA3. Within the complex UBXN2A acts as a scaffold protein required for the interaction of CHRNA3 with VCP/p97, this interaction also inhibits CHRNA3 ubiquitination by STUB1/CHIP and subsequently ERAD. Interacts with MKKS. Interacts with DNAAF4. Interacts (via the U-box domain) with the UBE2V2-UBE2N heterodimer; the complex has a specific 'Lys-63'-linked polyubiquitination activity. Interacts (when monoubiquitinated) with ATXN3. Interacts with UBE2W. Interacts with DNAJB6. Interacts with FLCN and HSP90AA1. Interacts with HSP90. Interacts with UBE2N and UBE2V1. Interacts (via TPR repeats) with HSPA8 (via C-terminus). Interacts (via TPR repeats) with HSPA1A (via C-terminus). Interacts with the non-acetylated form of HSPA1A and HSPA1B. Interacts with SMAD3 and HSP90AB1. Interacts with UBE4B. Interacts with PRMT5. Interacts with MYOCD (via C-terminus). Interacts with FOXO1 (when phosphorylated on 'Ser-253'). Interacts with MAPK7/ERK5; the interaction is enhanced in the presence of IGF1 or MAP2K5 and promotes STUB1/CHIP E3 ligase activity. Interacts with and ubiquitinates ESR1; the interaction is promoted in the absence of estradiol (17-beta-estradiol/E2). Interacts with ESR2. Interacts with and ubiquitinates NFATC3; HSPA1A/HSP70 is required as a co-chaperone. In macrophages, interacts with PAQR3; the interaction promotes PPARG poylubiquitination and STUB1-mediated degradation. Component of the chaperone-assisted selective autophagy (CASA) complex consisting of BAG3, HSPA8/HSC70, HSPB8 and STUB1/CHIP. Auto-ubiquitinated; mediated by UBE2D1 and UBE2D2 and enhanced in the presence of MAP2K5. Monoubiquitinated at Lys-2 following cell stress by UBE2W, promoting the interaction with ATXN3. As to expression, expressed in the brain.

It is found in the cytoplasm. The protein localises to the nucleus. Its subcellular location is the mitochondrion. The enzyme catalyses S-ubiquitinyl-[E2 ubiquitin-conjugating enzyme]-L-cysteine + [acceptor protein]-L-lysine = [E2 ubiquitin-conjugating enzyme]-L-cysteine + N(6)-ubiquitinyl-[acceptor protein]-L-lysine.. The protein operates within protein modification; protein ubiquitination. E3 ubiquitin-protein ligase which targets misfolded chaperone substrates towards proteasomal degradation. Plays a role in the maintenance of mitochondrial morphology and promotes mitophagic removal of dysfunctional mitochondria; thereby acts as a protector against apoptosis in response to cellular stress. Negatively regulates vascular smooth muscle contraction, via degradation of the transcriptional activator MYOCD and subsequent loss of transcription of genes involved in vascular smooth muscle contraction. Promotes survival and proliferation of cardiac smooth muscle cells via ubiquitination and degradation of FOXO1, resulting in subsequent repression of FOXO1-mediated transcription of pro-apoptotic genes. Ubiquitinates ICER-type isoforms of CREM and targets them for proteasomal degradation, thereby acts as a positive effector of MAPK/ERK-mediated inhibition of apoptosis in cardiomyocytes. Inhibits lipopolysaccharide-induced apoptosis and hypertrophy in cardiomyocytes, via ubiquitination and subsequent proteasomal degradation of NFATC3. Collaborates with ATXN3 in the degradation of misfolded chaperone substrates: ATXN3 restricting the length of ubiquitin chain attached to STUB1/CHIP substrates and preventing further chain extension. Ubiquitinates NOS1 in concert with Hsp70 and Hsp40. Modulates the activity of several chaperone complexes, including Hsp70, Hsc70 and Hsp90. Ubiquitinates CHRNA3 targeting it for endoplasmic reticulum-associated degradation in cortical neurons, as part of the STUB1-VCP-UBXN2A complex. Ubiquitinates and promotes ESR1 proteasomal degradation in response to age-related circulating estradiol (17-beta-estradiol/E2) decline, thereby promotes neuronal apoptosis in response to ischemic reperfusion injury. Mediates transfer of non-canonical short ubiquitin chains to HSPA8 that have no effect on HSPA8 degradation. Mediates polyubiquitination of DNA polymerase beta (POLB) at 'Lys-41', 'Lys-61' and 'Lys-81', thereby playing a role in base-excision repair: catalyzes polyubiquitination by amplifying the HUWE1/ARF-BP1-dependent monoubiquitination and leading to POLB-degradation by the proteasome. Mediates polyubiquitination of CYP3A4. Ubiquitinates EPHA2 and may regulate the receptor stability and activity through proteasomal degradation. Acts as a co-chaperone for HSPA1A and HSPA1B chaperone proteins and promotes ubiquitin-mediated protein degradation. Negatively regulates the suppressive function of regulatory T-cells (Treg) during inflammation by mediating the ubiquitination and degradation of FOXP3 in a HSPA1A/B-dependent manner. Catalyzes monoubiquitination of SIRT6, preventing its degradation by the proteasome. Likely mediates polyubiquitination and down-regulates plasma membrane expression of PD-L1/CD274, an immune inhibitory ligand critical for immune tolerance to self and antitumor immunity. Negatively regulates TGF-beta signaling by modulating the basal level of SMAD3 via ubiquitin-mediated degradation. Plays a role in the degradation of TP53. Mediates ubiquitination of RIPK3 leading to its subsequent proteasome-dependent degradation. May regulate myosin assembly in striated muscles together with UBE4B and VCP/p97 by targeting myosin chaperone UNC45B for proteasomal degradation. Ubiquitinates PPARG in macrophages playing a role in M2 macrophages polarization and angiogenesis. The polypeptide is E3 ubiquitin-protein ligase CHIP (Mus musculus (Mouse)).